We begin with the raw amino-acid sequence, 35 residues long: 30 kDa neutral phosphatase (35 aa).

The segment covering 1-28 (KSSAEVQQTQQASIPASQKANLGNQNNI) has biased composition (polar residues). The segment at 1 to 35 (KSSAEVQQTQQASIPASQKANLGNQNNIMXVAXYQ) is disordered.

Highly cationic enzyme that can bind human or rat immunoglobulins as well as serum albumin, and could therefore be involved in post-infectious sequelae. In Staphylococcus aureus, this protein is 30 kDa neutral phosphatase.